A 116-amino-acid polypeptide reads, in one-letter code: Mercuric transport protein MerT (116 aa).

2 consecutive transmembrane segments (helical) span residues 16 to 36 (LAAILASACCLGPLVLIALGF) and 46 to 66 (VLEPYRPIFIGAALVALFFAW). Residues Cys24 and Cys25 each contribute to the Hg(2+) site. Residues Cys76 and Cys82 each coordinate Hg(2+). A helical transmembrane segment spans residues 94–114 (IFWVVAALVLVALGFPYVMPF).

Belongs to the MerT family.

The protein resides in the cell inner membrane. Involved in mercury resistance. Probably transfers a mercuric ion from the periplasmic Hg(2+)-binding protein MerP to the cytoplasmic mercuric reductase MerA. In Serratia marcescens, this protein is Mercuric transport protein MerT.